A 715-amino-acid polypeptide reads, in one-letter code: DNA ligase (715 aa).

NAD(+) is bound by residues 47-51 (DADYD), 96-97 (SL), and E128. The active-site N6-AMP-lysine intermediate is the K130. NAD(+) is bound by residues R151, E188, K306, and K330. The Zn(2+) site is built by C435, C438, C453, and C459. The region spanning 637–715 (RRDTAVAGKT…EDEWLALIGN (79 aa)) is the BRCT domain.

It belongs to the NAD-dependent DNA ligase family. LigA subfamily. Mg(2+) is required as a cofactor. It depends on Mn(2+) as a cofactor.

The enzyme catalyses NAD(+) + (deoxyribonucleotide)n-3'-hydroxyl + 5'-phospho-(deoxyribonucleotide)m = (deoxyribonucleotide)n+m + AMP + beta-nicotinamide D-nucleotide.. In terms of biological role, DNA ligase that catalyzes the formation of phosphodiester linkages between 5'-phosphoryl and 3'-hydroxyl groups in double-stranded DNA using NAD as a coenzyme and as the energy source for the reaction. It is essential for DNA replication and repair of damaged DNA. In Rhodopseudomonas palustris (strain ATCC BAA-98 / CGA009), this protein is DNA ligase.